The following is a 144-amino-acid chain: Large ribosomal subunit protein uL15 (144 aa).

Positions 1-45 (MNLNTLSPDPGSRPSRRRVGRGIGSGLGKTCGKGHKGQKSRAGGY) are disordered. Residues 21–31 (RGIGSGLGKTC) show a composition bias toward gly residues.

This sequence belongs to the universal ribosomal protein uL15 family. Part of the 50S ribosomal subunit.

Functionally, binds to the 23S rRNA. The polypeptide is Large ribosomal subunit protein uL15 (Legionella pneumophila (strain Paris)).